The sequence spans 207 residues: Large ribosomal subunit protein uL3 (207 aa).

It belongs to the universal ribosomal protein uL3 family. Part of the 50S ribosomal subunit. Forms a cluster with proteins L14 and L19.

One of the primary rRNA binding proteins, it binds directly near the 3'-end of the 23S rRNA, where it nucleates assembly of the 50S subunit. The protein is Large ribosomal subunit protein uL3 of Fervidobacterium nodosum (strain ATCC 35602 / DSM 5306 / Rt17-B1).